The chain runs to 333 residues: Photosystem II assembly protein Ycf48 (333 aa).

The N-terminal stretch at 1-25 is a signal peptide; that stretch reads MRVKMFKPLRLVLLIAVSVLLMAAR.

The protein belongs to the Ycf48 family. Part of early PSII assembly complexes which includes D1 (psbA) and PsbI; not found in mature PSII. Binds to the lumenal side of PSII complexes. Interacts with YidC.

It is found in the cellular thylakoid lumen. Its function is as follows. A factor required for optimal assembly of photosystem II (PSII), acting in the early stages of PSII assembly. Also plays a role in replacement of photodamaged D1 (psbA). Assists YidC in synthesis of chlorophyll-binding proteins. The protein is Photosystem II assembly protein Ycf48 of Synechococcus sp. (strain JA-2-3B'a(2-13)) (Cyanobacteria bacterium Yellowstone B-Prime).